We begin with the raw amino-acid sequence, 98 residues long: Capsid assembly scaffolding protein (98 aa).

The stretch at 40 to 62 forms a coiled coil; that stretch reads VSEYNDLTKSHEKLAAEKDDLIV.

It belongs to the phi29likevirus scaffolding protein family. In terms of assembly, homodimer. Interacts non-specifically with DNA; probably binds DNA in the early stages of DNA packaging.

Its function is as follows. Scaffolding protein involved in the icosahedric procapsid assembly. Coassembles with the capsid proteins to form the procapsid. The scaffolding protein is found within the capsid as a serie of concentric shells. During DNA packaging, the scaffolding protein molecules are released from the procapsid. This chain is Capsid assembly scaffolding protein (7), found in Bacillus subtilis (Bacteriophage phi-29).